The sequence spans 279 residues: Putative pyruvate, phosphate dikinase regulatory protein (279 aa).

153–160 (GVSRTSKT) lines the ADP pocket.

Belongs to the pyruvate, phosphate/water dikinase regulatory protein family. PDRP subfamily.

It carries out the reaction N(tele)-phospho-L-histidyl/L-threonyl-[pyruvate, phosphate dikinase] + ADP = N(tele)-phospho-L-histidyl/O-phospho-L-threonyl-[pyruvate, phosphate dikinase] + AMP + H(+). The catalysed reaction is N(tele)-phospho-L-histidyl/O-phospho-L-threonyl-[pyruvate, phosphate dikinase] + phosphate + H(+) = N(tele)-phospho-L-histidyl/L-threonyl-[pyruvate, phosphate dikinase] + diphosphate. Functionally, bifunctional serine/threonine kinase and phosphorylase involved in the regulation of the pyruvate, phosphate dikinase (PPDK) by catalyzing its phosphorylation/dephosphorylation. The protein is Putative pyruvate, phosphate dikinase regulatory protein of Rhodopseudomonas palustris (strain BisA53).